We begin with the raw amino-acid sequence, 174 residues long: B3 domain-containing protein At3g06220 (174 aa).

The TF-B3 DNA-binding region spans 8–101 (PRFYTVFLSC…SYEVSIYGRG (94 aa)). A disordered region spans residues 114-174 (EISDESESDN…ISDASDSDYY (61 aa)). 2 stretches are compositionally biased toward acidic residues: residues 139–150 (ENSDDTEGDNDS) and 164–174 (EISDASDSDYY).

Its subcellular location is the nucleus. In Arabidopsis thaliana (Mouse-ear cress), this protein is B3 domain-containing protein At3g06220.